The sequence spans 256 residues: Triosephosphate isomerase (256 aa).

Residue 9 to 11 (NWK) coordinates substrate. The active-site Electrophile is histidine 97. The active-site Proton acceptor is the glutamate 169. Residues glycine 175, serine 214, and 235–236 (GG) each bind substrate.

It belongs to the triosephosphate isomerase family. In terms of assembly, homodimer.

Its subcellular location is the cytoplasm. It carries out the reaction D-glyceraldehyde 3-phosphate = dihydroxyacetone phosphate. Its pathway is carbohydrate biosynthesis; gluconeogenesis. It functions in the pathway carbohydrate degradation; glycolysis; D-glyceraldehyde 3-phosphate from glycerone phosphate: step 1/1. In terms of biological role, involved in the gluconeogenesis. Catalyzes stereospecifically the conversion of dihydroxyacetone phosphate (DHAP) to D-glyceraldehyde-3-phosphate (G3P). This is Triosephosphate isomerase from Aliivibrio salmonicida (strain LFI1238) (Vibrio salmonicida (strain LFI1238)).